The following is a 279-amino-acid chain: Undecaprenyl-diphosphatase (279 aa).

A run of 8 helical transmembrane segments spans residues 2–22 (LIIE…TEWL), 44–64 (AFIE…VMLI), 85–105 (WQLW…AVPL), 113–133 (FYFM…FIWI), 163–183 (VLSI…AIIL), 188–208 (TVAA…YSGL), 223–243 (AQVL…LLAI), and 255–275 (FTIF…YSFF).

This sequence belongs to the UppP family.

It is found in the cell membrane. The enzyme catalyses di-trans,octa-cis-undecaprenyl diphosphate + H2O = di-trans,octa-cis-undecaprenyl phosphate + phosphate + H(+). In terms of biological role, catalyzes the dephosphorylation of undecaprenyl diphosphate (UPP). Confers resistance to bacitracin. The chain is Undecaprenyl-diphosphatase from Streptococcus pyogenes serotype M5 (strain Manfredo).